The chain runs to 357 residues: UDP-N-acetylglucosamine--N-acetylmuramyl-(pentapeptide) pyrophosphoryl-undecaprenol N-acetylglucosamine transferase (357 aa).

UDP-N-acetyl-alpha-D-glucosamine is bound by residues 15–17, N125, S190, and Q290; that span reads SGG.

It belongs to the glycosyltransferase 28 family. MurG subfamily.

It localises to the cell inner membrane. The enzyme catalyses di-trans,octa-cis-undecaprenyl diphospho-N-acetyl-alpha-D-muramoyl-L-alanyl-D-glutamyl-meso-2,6-diaminopimeloyl-D-alanyl-D-alanine + UDP-N-acetyl-alpha-D-glucosamine = di-trans,octa-cis-undecaprenyl diphospho-[N-acetyl-alpha-D-glucosaminyl-(1-&gt;4)]-N-acetyl-alpha-D-muramoyl-L-alanyl-D-glutamyl-meso-2,6-diaminopimeloyl-D-alanyl-D-alanine + UDP + H(+). It functions in the pathway cell wall biogenesis; peptidoglycan biosynthesis. Functionally, cell wall formation. Catalyzes the transfer of a GlcNAc subunit on undecaprenyl-pyrophosphoryl-MurNAc-pentapeptide (lipid intermediate I) to form undecaprenyl-pyrophosphoryl-MurNAc-(pentapeptide)GlcNAc (lipid intermediate II). This is UDP-N-acetylglucosamine--N-acetylmuramyl-(pentapeptide) pyrophosphoryl-undecaprenol N-acetylglucosamine transferase from Chlamydia pneumoniae (Chlamydophila pneumoniae).